We begin with the raw amino-acid sequence, 149 residues long: Hut operon positive regulatory protein (149 aa).

This sequence belongs to the HutP family. Homohexamer.

In terms of biological role, antiterminator that binds to cis-acting regulatory sequences on the mRNA in the presence of histidine, thereby suppressing transcription termination and activating the hut operon for histidine utilization. In Geobacillus sp. (strain WCH70), this protein is Hut operon positive regulatory protein.